A 599-amino-acid polypeptide reads, in one-letter code: Elongation factor 4 (599 aa).

The region spanning 2 to 184 (KNIRNFSIIA…RLVRDIPPPQ (183 aa)) is the tr-type G domain. GTP is bound by residues 14 to 19 (DHGKST) and 131 to 134 (NKID).

This sequence belongs to the TRAFAC class translation factor GTPase superfamily. Classic translation factor GTPase family. LepA subfamily.

The protein resides in the cell inner membrane. It carries out the reaction GTP + H2O = GDP + phosphate + H(+). Functionally, required for accurate and efficient protein synthesis under certain stress conditions. May act as a fidelity factor of the translation reaction, by catalyzing a one-codon backward translocation of tRNAs on improperly translocated ribosomes. Back-translocation proceeds from a post-translocation (POST) complex to a pre-translocation (PRE) complex, thus giving elongation factor G a second chance to translocate the tRNAs correctly. Binds to ribosomes in a GTP-dependent manner. The polypeptide is Elongation factor 4 (Salmonella agona (strain SL483)).